The sequence spans 97 residues: uncharacterized protein (97 aa).

Positions 1-16 are cleaved as a signal peptide; the sequence is MKQTVLLLFTALFLSG. Cys-17 is lipidated: N-palmitoyl cysteine. The S-diacylglycerol cysteine moiety is linked to residue Cys-17.

It is found in the cell membrane. This is an uncharacterized protein from Bacillus subtilis (strain 168).